Reading from the N-terminus, the 558-residue chain is MDLYDDDGESAQSEKVDVPSEESTIAGPETDIPAETIEENVPEVEENTLLEEDSLVDVDSPRPSQQRSKPSKSKRKRKRSSSGESSAAEPEIDAGAKVKGPLSNTNKEINVGTEFQAKIADLNLNDKACNEDRDDQDELIWNTPETIDDEKLEAFIRESSDRYLIPIDRALYILTINNFNFDSAIAEVARRNELKDVWTDQEITLFENCYQIFGKNFSQIRSALCHRSLQSIVQFYYESKKRVKYLNFVNSKCDDSSSSEETETPSPYPEAIFESMCDNCGEKAENMQINNAMNRPECRACLIYFNQTGVPRPTSLRLVLAERIRNQVSCPDNMKEYMKDFDKLSAQATGSTFQKRIIVKDQCVEYIIDVDKIPSSSCTENGNVGETSSPSAQKTEIQSESDGSGPLIWRHKKTVCMEEIEVLADDSRRKMFEACQHGSKVDIKLVASWKNDMTNLRKRVEQTYYDPDLNPTYLFSHDRVHYSQDWTQLERSQVIRCFNMYGAHFEHIADVIGTKTPDQVYQFYLENQKAIDAADEEFLADMKNPERLADMEEEEDSI.

Positions Met-1–Asn-106 are disordered. The segment covering Thr-36–Val-56 has biased composition (acidic residues). Positions Lys-69–Ser-80 are enriched in basic residues. Residues Lys-107–Asn-192 form the ELM2 domain. Residues Glu-193 to Lys-244 form the SANT 1 domain. A GATA-type zinc finger spans residues Ala-271 to Arg-325. Positions Cys-378–Asp-402 are enriched in polar residues. The tract at residues Cys-378–Pro-406 is disordered. Residues His-481 to Asp-532 enclose the SANT 2 domain.

This sequence belongs to the CoREST family. Probably part of a large repressor complex. Interacts with histone demethylase spr-5/lsd-1.

The protein resides in the nucleus. In terms of biological role, probable corepressor protein, which probably participates in the transcriptional repression of the presenilin protein hop-1. Probably acts via the formation of a multiprotein complex that deacetylates and demethylates specific sites on histones. Acts redundantly with the transcriptional repressor lin-35 to play a role in vulval morphogenesis and promote germline proliferation. This chain is REST corepressor spr-1, found in Caenorhabditis elegans.